The chain runs to 158 residues: Glycosyl-phosphatidylinositol-anchored molecule-like protein (158 aa).

The signal sequence occupies residues 1-17 (MLLFALLLAMELPLVAA). The UPAR/Ly6 domain maps to 29–134 (LRCHDCAVIN…DEVTEEELPE (106 aa)). Intrachain disulfides connect C31/C55, C34/C42, C48/C73, C77/C104, and C105/C110.

The protein resides in the cell membrane. May play a role in the apoptotic pathway or cell-cycle regulation induced by p53/TP53 after DNA damage. The polypeptide is Glycosyl-phosphatidylinositol-anchored molecule-like protein (GML) (Homo sapiens (Human)).